The chain runs to 462 residues: Bifunctional protein GlmU (462 aa).

Residues 1–239 form a pyrophosphorylase region; sequence MTESVSKPVR…EASVQGVNAQ (239 aa). UDP-N-acetyl-alpha-D-glucosamine contacts are provided by residues 17-20, lysine 31, glutamine 84, and 89-90; these read LAAG and GT. Aspartate 114 provides a ligand contact to Mg(2+). Positions 150, 165, 180, and 237 each coordinate UDP-N-acetyl-alpha-D-glucosamine. Asparagine 237 is a binding site for Mg(2+). The linker stretch occupies residues 240–260; sequence AELAAAEAVWQQNRRKALMVD. Residues 261-462 form an N-acetyltransferase region; sequence GVTMPAPDTV…QKDKKKDKKA (202 aa). Residues arginine 326 and lysine 344 each contribute to the UDP-N-acetyl-alpha-D-glucosamine site. The Proton acceptor role is filled by histidine 356. UDP-N-acetyl-alpha-D-glucosamine contacts are provided by tyrosine 359 and asparagine 370. Residues alanine 373, 379–380, serine 398, serine 416, and arginine 433 contribute to the acetyl-CoA site; that span reads NY.

It in the N-terminal section; belongs to the N-acetylglucosamine-1-phosphate uridyltransferase family. The protein in the C-terminal section; belongs to the transferase hexapeptide repeat family. Homotrimer. The cofactor is Mg(2+).

It is found in the cytoplasm. It carries out the reaction alpha-D-glucosamine 1-phosphate + acetyl-CoA = N-acetyl-alpha-D-glucosamine 1-phosphate + CoA + H(+). It catalyses the reaction N-acetyl-alpha-D-glucosamine 1-phosphate + UTP + H(+) = UDP-N-acetyl-alpha-D-glucosamine + diphosphate. Its pathway is nucleotide-sugar biosynthesis; UDP-N-acetyl-alpha-D-glucosamine biosynthesis; N-acetyl-alpha-D-glucosamine 1-phosphate from alpha-D-glucosamine 6-phosphate (route II): step 2/2. The protein operates within nucleotide-sugar biosynthesis; UDP-N-acetyl-alpha-D-glucosamine biosynthesis; UDP-N-acetyl-alpha-D-glucosamine from N-acetyl-alpha-D-glucosamine 1-phosphate: step 1/1. It participates in bacterial outer membrane biogenesis; LPS lipid A biosynthesis. In terms of biological role, catalyzes the last two sequential reactions in the de novo biosynthetic pathway for UDP-N-acetylglucosamine (UDP-GlcNAc). The C-terminal domain catalyzes the transfer of acetyl group from acetyl coenzyme A to glucosamine-1-phosphate (GlcN-1-P) to produce N-acetylglucosamine-1-phosphate (GlcNAc-1-P), which is converted into UDP-GlcNAc by the transfer of uridine 5-monophosphate (from uridine 5-triphosphate), a reaction catalyzed by the N-terminal domain. This chain is Bifunctional protein GlmU, found in Caulobacter vibrioides (strain ATCC 19089 / CIP 103742 / CB 15) (Caulobacter crescentus).